Reading from the N-terminus, the 782-residue chain is Spastin (782 aa).

The interval 1–103 (MVRTKNQSSS…GNAPRGGNSS (103 aa)) is disordered. Residues 1–115 (MVRTKNQSSS…KQNLYVVSFP (115 aa)) lie on the Cytoplasmic side of the membrane. Residues 1 to 212 (MVRTKNQSSS…RAIQPLEMAG (212 aa)) form a required for localization to punctate cytoplasmic foci region. Positions 8 to 19 (SSSSSASSSTKS) are enriched in low complexity. Residues 25–34 (GGTTNRSRSC) show a composition bias toward polar residues. 2 stretches are compositionally biased toward low complexity: residues 44-75 (SKSSSKPTSNNRQRTTTNNNTTAITTTPGSSP) and 84-93 (TTDADLTPTS). The helical intramembrane region spans 116-136 (IIFLFNVLRSLIYQLFCIFRY). At 137–782 (LYGASTKVIY…WSQDYGDITI (646 aa)) the chain is on the cytoplasmic side. Residues 210-782 (MAGNRAGGNY…WSQDYGDITI (573 aa)) are sufficient for interaction with microtubules and microtubule severing. The region spanning 235–310 (HRRAFEYISK…SMARDRLHFL (76 aa)) is the MIT domain. The interval 325 to 479 (KEQQQKKKSP…GSGSGASTPM (155 aa)) is disordered. Residues 334–343 (PQQQPQQQQQ) show a composition bias toward low complexity. Composition is skewed to polar residues over residues 408–426 (NKSQTLPRNLGSKTSSTSV) and 447–463 (QFSSGRNTPPQRSRTPI). Residues 465-479 (NNAAGGSGSGASTPM) are required for interaction with microtubules. 547–554 (GPPGNGKT) contacts ATP.

Belongs to the AAA ATPase family. Spastin subfamily. As to quaternary structure, homohexamer. The homohexamer is stabilized by ATP-binding. The homohexamer may adopt a ring conformation through which microtubules pass prior to being severed. Interacts with microtubules. Interacts with atl; may be involved in microtubule dynamics.

It localises to the membrane. The protein resides in the cytoplasm. It is found in the cytoskeleton. Its subcellular location is the microtubule organizing center. The protein localises to the centrosome. It localises to the chromosome. The protein resides in the lipid droplet. The catalysed reaction is n ATP + n H2O + a microtubule = n ADP + n phosphate + (n+1) alpha/beta tubulin heterodimers.. Functionally, ATP-dependent microtubule severing protein. Stimulates microtubule minus-end depolymerization and poleward microtubule flux in the mitotic spindle. Regulates microtubule stability in the neuromuscular junction synapse. Involved in lipid metabolism by regulating the size and distribution of lipid droplets. Involved in axon regeneration by regulating microtubule severing. This Drosophila grimshawi (Hawaiian fruit fly) protein is Spastin.